A 311-amino-acid polypeptide reads, in one-letter code: Malate dehydrogenase (311 aa).

NAD(+) is bound by residues 7–13 and aspartate 34; that span reads GAAGGIG. Substrate-binding residues include arginine 81 and arginine 87. Residues asparagine 94 and 117 to 119 each bind NAD(+); that span reads ITN. The substrate site is built by asparagine 119 and arginine 153. Histidine 177 serves as the catalytic Proton acceptor. Methionine 227 contacts NAD(+).

It belongs to the LDH/MDH superfamily. MDH type 1 family. As to quaternary structure, homodimer.

It catalyses the reaction (S)-malate + NAD(+) = oxaloacetate + NADH + H(+). In terms of biological role, catalyzes the reversible oxidation of malate to oxaloacetate. In Shewanella amazonensis (strain ATCC BAA-1098 / SB2B), this protein is Malate dehydrogenase.